A 236-amino-acid chain; its full sequence is tRNA (guanine-N(7)-)-methyltransferase (236 aa).

The S-adenosyl-L-methionine site is built by Asp35, Glu60, Asn87, and Asp113. Asp113 is an active-site residue. Positions 117 and 149 each coordinate substrate.

This sequence belongs to the class I-like SAM-binding methyltransferase superfamily. TrmB family.

It carries out the reaction guanosine(46) in tRNA + S-adenosyl-L-methionine = N(7)-methylguanosine(46) in tRNA + S-adenosyl-L-homocysteine. It participates in tRNA modification; N(7)-methylguanine-tRNA biosynthesis. Catalyzes the formation of N(7)-methylguanine at position 46 (m7G46) in tRNA. This chain is tRNA (guanine-N(7)-)-methyltransferase, found in Parasynechococcus marenigrum (strain WH8102).